The following is a 328-amino-acid chain: Stress response kinase A (328 aa).

Catalysis depends on Asp-201, which acts as the Proton acceptor. Mg(2+)-binding residues include Asn-206 and Asp-217. Residue Asp-217 is part of the active site.

It belongs to the SrkA/RdoA protein kinase family. Monomer. Mg(2+) serves as cofactor.

It localises to the cytoplasm. It catalyses the reaction L-seryl-[protein] + ATP = O-phospho-L-seryl-[protein] + ADP + H(+). It carries out the reaction L-threonyl-[protein] + ATP = O-phospho-L-threonyl-[protein] + ADP + H(+). Its function is as follows. A protein kinase that phosphorylates Ser and Thr residues. Probably acts to suppress the effects of stress linked to accumulation of reactive oxygen species. Probably involved in the extracytoplasmic stress response. This Salmonella paratyphi A (strain ATCC 9150 / SARB42) protein is Stress response kinase A.